The following is a 148-amino-acid chain: Large ribosomal subunit protein uL15 (148 aa).

Residues 1–30 (MPSRLRKTRKLRGHVSHGHGRIGKHRKHPG) show a composition bias toward basic residues. Residues 1-37 (MPSRLRKTRKLRGHVSHGHGRIGKHRKHPGGRGNAGG) are disordered. His39 bears the (3S)-3-hydroxyhistidine mark. Lys47 and Lys55 each carry N6-acetyllysine. Ser68 is modified (phosphoserine). N6-acetyllysine is present on Lys110.

It belongs to the universal ribosomal protein uL15 family. As to quaternary structure, component of the large ribosomal subunit. In terms of processing, hydroxylated on His-39 by MINA.

Its subcellular location is the cytoplasm. Component of the large ribosomal subunit. The ribosome is a large ribonucleoprotein complex responsible for the synthesis of proteins in the cell. The chain is Large ribosomal subunit protein uL15 (RPL27A) from Bos taurus (Bovine).